Reading from the N-terminus, the 122-residue chain is MGLFSKRQIGNQYETLAKQYLQRQGLRFLDQNFLTKVGEIDLIFQQGETIVFVEVKYRKNDSFGSAAEMVTRAKMRKLVKTAQIWLSQQKRSAYNIDYRFDVVAIHDSGRDINWIQNAISEG.

Belongs to the UPF0102 family.

The chain is UPF0102 protein VIBHAR_00890 from Vibrio campbellii (strain ATCC BAA-1116).